Consider the following 396-residue polypeptide: Tryptophan synthase beta chain (396 aa).

Residue lysine 88 is modified to N6-(pyridoxal phosphate)lysine.

It belongs to the TrpB family. Tetramer of two alpha and two beta chains. The cofactor is pyridoxal 5'-phosphate.

It catalyses the reaction (1S,2R)-1-C-(indol-3-yl)glycerol 3-phosphate + L-serine = D-glyceraldehyde 3-phosphate + L-tryptophan + H2O. The protein operates within amino-acid biosynthesis; L-tryptophan biosynthesis; L-tryptophan from chorismate: step 5/5. The beta subunit is responsible for the synthesis of L-tryptophan from indole and L-serine. In Shewanella sp. (strain W3-18-1), this protein is Tryptophan synthase beta chain.